Reading from the N-terminus, the 412-residue chain is Multifunctional CCA protein (412 aa).

ATP contacts are provided by Gly-8 and Arg-11. Residues Gly-8 and Arg-11 each contribute to the CTP site. 2 residues coordinate Mg(2+): Asp-21 and Asp-23. Residues Arg-91, Arg-137, and Arg-140 each contribute to the ATP site. CTP contacts are provided by Arg-91, Arg-137, and Arg-140. The region spanning 228 to 329 (TGIHTLMTLS…VKLFDSIDAW (102 aa)) is the HD domain.

The protein belongs to the tRNA nucleotidyltransferase/poly(A) polymerase family. Bacterial CCA-adding enzyme type 1 subfamily. As to quaternary structure, monomer. Can also form homodimers and oligomers. Mg(2+) serves as cofactor. Ni(2+) is required as a cofactor.

It catalyses the reaction a tRNA precursor + 2 CTP + ATP = a tRNA with a 3' CCA end + 3 diphosphate. The catalysed reaction is a tRNA with a 3' CCA end + 2 CTP + ATP = a tRNA with a 3' CCACCA end + 3 diphosphate. In terms of biological role, catalyzes the addition and repair of the essential 3'-terminal CCA sequence in tRNAs without using a nucleic acid template. Adds these three nucleotides in the order of C, C, and A to the tRNA nucleotide-73, using CTP and ATP as substrates and producing inorganic pyrophosphate. tRNA 3'-terminal CCA addition is required both for tRNA processing and repair. Also involved in tRNA surveillance by mediating tandem CCA addition to generate a CCACCA at the 3' terminus of unstable tRNAs. While stable tRNAs receive only 3'-terminal CCA, unstable tRNAs are marked with CCACCA and rapidly degraded. The sequence is that of Multifunctional CCA protein from Escherichia coli (strain SMS-3-5 / SECEC).